Reading from the N-terminus, the 373-residue chain is Dual-specificity RNA methyltransferase RlmN (373 aa).

Glutamate 94 acts as the Proton acceptor in catalysis. A Radical SAM core domain is found at 100 to 339 (EDDRATLCVS…VIVRKTRGDD (240 aa)). A disulfide bond links cysteine 107 and cysteine 344. Positions 114, 118, and 121 each coordinate [4Fe-4S] cluster. Residues 168-169 (GE), serine 200, 222-224 (SIH), and asparagine 301 contribute to the S-adenosyl-L-methionine site. Catalysis depends on cysteine 344, which acts as the S-methylcysteine intermediate.

This sequence belongs to the radical SAM superfamily. RlmN family. It depends on [4Fe-4S] cluster as a cofactor.

The protein localises to the cytoplasm. It catalyses the reaction adenosine(2503) in 23S rRNA + 2 reduced [2Fe-2S]-[ferredoxin] + 2 S-adenosyl-L-methionine = 2-methyladenosine(2503) in 23S rRNA + 5'-deoxyadenosine + L-methionine + 2 oxidized [2Fe-2S]-[ferredoxin] + S-adenosyl-L-homocysteine. The catalysed reaction is adenosine(37) in tRNA + 2 reduced [2Fe-2S]-[ferredoxin] + 2 S-adenosyl-L-methionine = 2-methyladenosine(37) in tRNA + 5'-deoxyadenosine + L-methionine + 2 oxidized [2Fe-2S]-[ferredoxin] + S-adenosyl-L-homocysteine. Its function is as follows. Specifically methylates position 2 of adenine 2503 in 23S rRNA and position 2 of adenine 37 in tRNAs. m2A2503 modification seems to play a crucial role in the proofreading step occurring at the peptidyl transferase center and thus would serve to optimize ribosomal fidelity. The sequence is that of Dual-specificity RNA methyltransferase RlmN from Shewanella baltica (strain OS223).